Consider the following 107-residue polypeptide: Thiosulfate sulfurtransferase GlpE (107 aa).

Residues 19–107 (KDHNARMVDI…WNKAGLPVEK (89 aa)) form the Rhodanese domain. The Cysteine persulfide intermediate role is filled by cysteine 67.

It belongs to the GlpE family.

It is found in the cytoplasm. It carries out the reaction thiosulfate + hydrogen cyanide = thiocyanate + sulfite + 2 H(+). It catalyses the reaction thiosulfate + [thioredoxin]-dithiol = [thioredoxin]-disulfide + hydrogen sulfide + sulfite + 2 H(+). Its function is as follows. Transferase that catalyzes the transfer of sulfur from thiosulfate to thiophilic acceptors such as cyanide or dithiols. May function in a CysM-independent thiosulfate assimilation pathway by catalyzing the conversion of thiosulfate to sulfite, which can then be used for L-cysteine biosynthesis. The polypeptide is Thiosulfate sulfurtransferase GlpE (Aliivibrio salmonicida (strain LFI1238) (Vibrio salmonicida (strain LFI1238))).